A 262-amino-acid chain; its full sequence is Hydroxyethylthiazole kinase (262 aa).

Residue Met50 participates in substrate binding. ATP is bound by residues Arg125 and Thr171. Gly198 lines the substrate pocket.

The protein belongs to the Thz kinase family. Mg(2+) serves as cofactor.

The catalysed reaction is 5-(2-hydroxyethyl)-4-methylthiazole + ATP = 4-methyl-5-(2-phosphooxyethyl)-thiazole + ADP + H(+). It functions in the pathway cofactor biosynthesis; thiamine diphosphate biosynthesis; 4-methyl-5-(2-phosphoethyl)-thiazole from 5-(2-hydroxyethyl)-4-methylthiazole: step 1/1. In terms of biological role, catalyzes the phosphorylation of the hydroxyl group of 4-methyl-5-beta-hydroxyethylthiazole (THZ). In Escherichia coli (strain SMS-3-5 / SECEC), this protein is Hydroxyethylthiazole kinase.